Reading from the N-terminus, the 193-residue chain is Pyridoxal 5'-phosphate synthase subunit PdxT (193 aa).

48–50 lines the L-glutamine pocket; the sequence is GES. Cys-80 functions as the Nucleophile in the catalytic mechanism. L-glutamine is bound by residues Arg-107 and 136-137; that span reads IR. Residues His-172 and Glu-174 each act as charge relay system in the active site.

It belongs to the glutaminase PdxT/SNO family. In the presence of PdxS, forms a dodecamer of heterodimers. Only shows activity in the heterodimer.

It carries out the reaction aldehydo-D-ribose 5-phosphate + D-glyceraldehyde 3-phosphate + L-glutamine = pyridoxal 5'-phosphate + L-glutamate + phosphate + 3 H2O + H(+). It catalyses the reaction L-glutamine + H2O = L-glutamate + NH4(+). It participates in cofactor biosynthesis; pyridoxal 5'-phosphate biosynthesis. In terms of biological role, catalyzes the hydrolysis of glutamine to glutamate and ammonia as part of the biosynthesis of pyridoxal 5'-phosphate. The resulting ammonia molecule is channeled to the active site of PdxS. This Clostridium botulinum (strain Loch Maree / Type A3) protein is Pyridoxal 5'-phosphate synthase subunit PdxT.